Consider the following 719-residue polypeptide: DNA replication licensing factor MCM7 (719 aa).

The residue at position 2 (Ala2) is an N-acetylalanine. Residues Lys15 and Lys28 each participate in a glycyl lysine isopeptide (Lys-Gly) (interchain with G-Cter in SUMO2) cross-link. Residues Ser121 and Ser314 each carry the phosphoserine modification. The MCM domain maps to 332-538 (FYEKLAASIA…NDLRLAQHIT (207 aa)). Tyr345 contacts ATP. Ser365 carries the post-translational modification Phosphoserine. Gly384, Ala386, Lys387, Ser388, and Asn489 together coordinate ATP. Ser500 is modified (phosphoserine). The Arginine finger signature appears at 513-516 (SRFD). Position 514 (Arg514) interacts with ATP. An interaction with RAD17 region spans residues 521 to 564 (IQDRPDRDNDLRLAQHITYVHQHSRQPPAQFEPLDMKLMRRYIA). The segment at 577-719 (LADYITAAYV…NTARTRITFV (143 aa)) is interaction with ATRIP. Arg604 contributes to the ATP binding site. Residue Ser678 is modified to Phosphoserine.

The protein belongs to the MCM family. Component of the MCM2-7 complex. The complex forms a toroidal hexameric ring with the proposed subunit order MCM2-MCM6-MCM4-MCM7-MCM3-MCM5. Component of the CMG helicase complex, a hexameric ring of related MCM2-7 subunits stabilized by CDC45 and the tetrameric GINS complex. Interacts with the ATR-ATRIP complex and with RAD17. Interacts with TIPIN. Interacts with MCMBP. Interacts with ANKRD17. Component of the replisome complex composed of at least DONSON, MCM2, MCM7, PCNA and TICRR. In terms of processing, O-glycosylated (O-GlcNAcylated), in a cell cycle-dependent manner. Post-translationally, ubiquitinated by ECS(LRR1) E3 ubiquitin-protein ligase complex when forks converge following formation of DNA interstrand cross-links. During mitosis, ubiquitinated by TRAIP when forks converge following formation of DNA interstrand cross-links. Short ubiquitin chains on MCM7 promote recruitment of DNA glycosylase NEIL3. If the interstrand cross-link cannot be cleaved by NEIL3, the ubiquitin chains continue to grow on MCM7, promoting the unloading of the CMG helicase complex by the VCP/p97 ATPase.

It localises to the nucleus. The protein localises to the chromosome. It catalyses the reaction ATP + H2O = ADP + phosphate + H(+). Acts as a component of the MCM2-7 complex (MCM complex) which is the replicative helicase essential for 'once per cell cycle' DNA replication initiation and elongation in eukaryotic cells. Core component of CDC45-MCM-GINS (CMG) helicase, the molecular machine that unwinds template DNA during replication, and around which the replisome is built. The active ATPase sites in the MCM2-7 ring are formed through the interaction surfaces of two neighboring subunits such that a critical structure of a conserved arginine finger motif is provided in trans relative to the ATP-binding site of the Walker A box of the adjacent subunit. The six ATPase active sites, however, are likely to contribute differentially to the complex helicase activity. Required for S-phase checkpoint activation upon UV-induced damage. The chain is DNA replication licensing factor MCM7 (MCM7) from Bos taurus (Bovine).